The sequence spans 69 residues: uncharacterized protein (69 aa).

Residues 22–48 (LFRKSRELSPIKPVRTPTPPAPTPPPM) are disordered. Residues 37 to 48 (TPTPPAPTPPPM) show a composition bias toward pro residues.

This is an uncharacterized protein from Lepidoptera (butterflies and moths).